Consider the following 333-residue polypeptide: Fructose-1,6-bisphosphatase class 1 (333 aa).

Residues E92, D113, L115, and D116 each contribute to the Mg(2+) site. Residues 116 to 119, N209, Y242, and K272 each bind substrate; that span reads DGSS. E278 lines the Mg(2+) pocket.

Belongs to the FBPase class 1 family. Homotetramer. The cofactor is Mg(2+).

It localises to the cytoplasm. The enzyme catalyses beta-D-fructose 1,6-bisphosphate + H2O = beta-D-fructose 6-phosphate + phosphate. Its pathway is carbohydrate biosynthesis; Calvin cycle. The sequence is that of Fructose-1,6-bisphosphatase class 1 from Chlorobium phaeobacteroides (strain BS1).